The following is a 323-amino-acid chain: Zinc finger protein 784 (323 aa).

The segment at 1–26 is disordered; the sequence is MAAARPEAQSRSSPTPESRSQEPLDL. Residues 9-18 are compositionally biased toward polar residues; sequence QSRSSPTPES. Ser13 is subject to Phosphoserine. 6 C2H2-type zinc fingers span residues 65 to 87, 101 to 123, 129 to 151, 196 to 218, 224 to 246, and 252 to 274; these read FHCALCPAAFRLVSELLFHEHGH, SRCHVCGHSCPGPASLRAHYSLH, YRCALCPRAFKALAPLLRHQHRH, FACRFCAKPFRRSSDMRDHERVH, YHCGICGKGFTQSSVLSGHARIH, and FRCTLCDRTFNNSSNFRKHQRTH. Residues 269–323 are disordered; sequence KHQRTHFHGPGPGLGDSGGQLGSSAAEGSGSGCGVGDPAEEGRGETAKVKVEADQ. Positions 278–289 are enriched in gly residues; the sequence is PGPGLGDSGGQL. Basic and acidic residues predominate over residues 308 to 323; that stretch reads EEGRGETAKVKVEADQ. Residue Lys318 forms a Glycyl lysine isopeptide (Lys-Gly) (interchain with G-Cter in SUMO2) linkage.

It belongs to the krueppel C2H2-type zinc-finger protein family.

The protein localises to the nucleus. Functionally, may be involved in transcriptional regulation. This chain is Zinc finger protein 784 (ZNF784), found in Homo sapiens (Human).